A 413-amino-acid chain; its full sequence is Short-chain specific acyl-CoA dehydrogenase, mitochondrial (413 aa).

The transit peptide at 1–24 (MAAALLARACGPVRGALWPRDCRR) directs the protein to the mitochondrion. At Thr-27 the chain carries Phosphothreonine. Lys-51 bears the N6-acetyllysine; alternate mark. Lys-51 is modified (N6-succinyllysine; alternate). Residue Lys-72 is modified to N6-acetyllysine. Lys-129 carries the post-translational modification N6-acetyllysine; alternate. N6-succinyllysine; alternate is present on Lys-129. FAD-binding positions include 152-161 (FALSEPGNGS) and 185-187 (WIT). Ser-161 contributes to the substrate binding site. At Lys-208 the chain carries N6-acetyllysine. Lys-262 is subject to N6-acetyllysine; alternate. The residue at position 262 (Lys-262) is an N6-succinyllysine; alternate. Residue 269 to 272 (DMGR) coordinates substrate. Arg-297 is a binding site for FAD. Lys-306 is modified (N6-acetyllysine; alternate). Lys-306 carries the post-translational modification N6-succinyllysine; alternate. FAD-binding positions include Gln-308 and 366–370 (QILGG). The active-site Proton acceptor is the Glu-393. Gly-394 is a binding site for substrate. An FAD-binding site is contributed by 395–397 (TSE).

Belongs to the acyl-CoA dehydrogenase family. As to quaternary structure, homotetramer. FAD is required as a cofactor.

Its subcellular location is the mitochondrion matrix. It carries out the reaction a short-chain 2,3-saturated fatty acyl-CoA + oxidized [electron-transfer flavoprotein] + H(+) = a short-chain (2E)-enoyl-CoA + reduced [electron-transfer flavoprotein]. The enzyme catalyses butanoyl-CoA + oxidized [electron-transfer flavoprotein] + H(+) = (2E)-butenoyl-CoA + reduced [electron-transfer flavoprotein]. The catalysed reaction is pentanoyl-CoA + oxidized [electron-transfer flavoprotein] + H(+) = (2E)-pentenoyl-CoA + reduced [electron-transfer flavoprotein]. It catalyses the reaction hexanoyl-CoA + oxidized [electron-transfer flavoprotein] + H(+) = (2E)-hexenoyl-CoA + reduced [electron-transfer flavoprotein]. The protein operates within lipid metabolism; mitochondrial fatty acid beta-oxidation. Functionally, short-chain specific acyl-CoA dehydrogenase is one of the acyl-CoA dehydrogenases that catalyze the first step of mitochondrial fatty acid beta-oxidation, an aerobic process breaking down fatty acids into acetyl-CoA and allowing the production of energy from fats. The first step of fatty acid beta-oxidation consists in the removal of one hydrogen from C-2 and C-3 of the straight-chain fatty acyl-CoA thioester, resulting in the formation of trans-2-enoyl-CoA. Among the different mitochondrial acyl-CoA dehydrogenases, short-chain specific acyl-CoA dehydrogenase acts specifically on acyl-CoAs with saturated 4 to 6 carbons long primary chains. The chain is Short-chain specific acyl-CoA dehydrogenase, mitochondrial (ACADS) from Sus scrofa (Pig).